The primary structure comprises 617 residues: Chaperone protein HscA homolog (617 aa).

This sequence belongs to the heat shock protein 70 family.

Its function is as follows. Chaperone involved in the maturation of iron-sulfur cluster-containing proteins. Has a low intrinsic ATPase activity which is markedly stimulated by HscB. The sequence is that of Chaperone protein HscA homolog from Vibrio campbellii (strain ATCC BAA-1116).